The following is a 517-amino-acid chain: Crotonobetaine/carnitine--CoA ligase (517 aa).

Belongs to the ATP-dependent AMP-binding enzyme family.

The catalysed reaction is 4-(trimethylamino)butanoate + ATP + CoA = 4-(trimethylamino)butanoyl-CoA + AMP + diphosphate. The enzyme catalyses crotonobetaine + ATP + CoA = crotonobetainyl-CoA + AMP + diphosphate. It carries out the reaction (R)-carnitine + ATP + CoA = (R)-carnitinyl-CoA + AMP + diphosphate. It participates in amine and polyamine metabolism; carnitine metabolism. Functionally, catalyzes the transfer of CoA to carnitine, generating the initial carnitinyl-CoA needed for the CaiB reaction cycle. Also has activity toward crotonobetaine and gamma-butyrobetaine. The protein is Crotonobetaine/carnitine--CoA ligase of Escherichia coli O45:K1 (strain S88 / ExPEC).